Consider the following 72-residue polypeptide: Large ribosomal subunit protein bL31 (72 aa).

Zn(2+) is bound by residues cysteine 16, cysteine 18, cysteine 38, and cysteine 41.

It belongs to the bacterial ribosomal protein bL31 family. Type A subfamily. Part of the 50S ribosomal subunit. The cofactor is Zn(2+).

In terms of biological role, binds the 23S rRNA. The protein is Large ribosomal subunit protein bL31 of Azoarcus sp. (strain BH72).